The chain runs to 183 residues: Proton-transporting V-type ATPase complex assembly regulator TMEM9 (183 aa).

An N-terminal signal peptide occupies residues 1–20; that stretch reads MKLLSLVAVVGCLLVPPAEA. Residues Asn21, Asn38, and Asn47 are each glycosylated (N-linked (GlcNAc...) asparagine). Topologically, residues 21-89 are extracellular; sequence NKSSEDIRCK…YEERSTTTIK (69 aa). A helical membrane pass occupies residues 90–110; that stretch reads VIIVIYLSVVGALLLYMAFLM. Residues 111 to 183 lie on the Cytoplasmic side of the membrane; that stretch reads LVDPLIRKPD…TVFDRHKMLS (73 aa). Phosphoserine occurs at positions 137 and 144.

The protein belongs to the TMEM9 family. In terms of assembly, interacts with the v-ATPase accessory protein ATP6AP2 and with the v-ATPase complex subunit ATP6V0D1; these interactions lead to the assembly of the v-ATPase complex. Post-translationally, N-glycosylated. Highly expressed in adrenal gland, thyroid gland, testis, ovary and prostate. Moderate expression in trachea, spinal cord, stomach, colon, small intestine and spleen. Low expression in bone marrow, lymph node, thymus and peripheral blood lymphocytes. Expression is detected in hematopoietic cell lines including those of myeloid, erythroid, B- and T-cell origin.

It is found in the lysosome membrane. Its subcellular location is the late endosome membrane. The protein localises to the endosome. The protein resides in the multivesicular body membrane. Transmembrane protein that binds to and facilitates the assembly of lysosomal proton-transporting V-type ATPase (v-ATPase), resulting in enhanced lysosomal acidification and trafficking. By bringing the v-ATPase accessory protein ATP6AP2 and the v-ATPase subunit ATP6V0D1 together, allows v-ATPase complex formation and activation. TMEM9-controlled vesicular acidification induces hyperactivation of Wnt/beta-catenin signaling, involved in development, tissue homeostasis and tissue regeneration, through lysosomal degradation of adenomatous polyposis coli/APC. In the liver, involved in hepatic regeneration. The chain is Proton-transporting V-type ATPase complex assembly regulator TMEM9 from Homo sapiens (Human).